A 338-amino-acid chain; its full sequence is tRNA N6-adenosine threonylcarbamoyltransferase (338 aa).

Positions 111 and 115 each coordinate Fe cation. Residues 134–138, Asp-167, Gly-180, and Asn-272 each bind substrate; that span reads LVSGG. A Fe cation-binding site is contributed by Asp-300.

This sequence belongs to the KAE1 / TsaD family. It depends on Fe(2+) as a cofactor.

It is found in the cytoplasm. It catalyses the reaction L-threonylcarbamoyladenylate + adenosine(37) in tRNA = N(6)-L-threonylcarbamoyladenosine(37) in tRNA + AMP + H(+). Required for the formation of a threonylcarbamoyl group on adenosine at position 37 (t(6)A37) in tRNAs that read codons beginning with adenine. Is involved in the transfer of the threonylcarbamoyl moiety of threonylcarbamoyl-AMP (TC-AMP) to the N6 group of A37, together with TsaE and TsaB. TsaD likely plays a direct catalytic role in this reaction. The sequence is that of tRNA N6-adenosine threonylcarbamoyltransferase from Shewanella denitrificans (strain OS217 / ATCC BAA-1090 / DSM 15013).